The sequence spans 122 residues: Small ribosomal subunit protein uS13 (122 aa).

The disordered stretch occupies residues 95–122; that stretch reads NLPVRGQRTHTNARTRKGKAKPIAGKKK.

Belongs to the universal ribosomal protein uS13 family. In terms of assembly, part of the 30S ribosomal subunit. Forms a loose heterodimer with protein S19. Forms two bridges to the 50S subunit in the 70S ribosome.

In terms of biological role, located at the top of the head of the 30S subunit, it contacts several helices of the 16S rRNA. In the 70S ribosome it contacts the 23S rRNA (bridge B1a) and protein L5 of the 50S subunit (bridge B1b), connecting the 2 subunits; these bridges are implicated in subunit movement. Contacts the tRNAs in the A and P-sites. In Methylobacterium nodulans (strain LMG 21967 / CNCM I-2342 / ORS 2060), this protein is Small ribosomal subunit protein uS13.